The primary structure comprises 259 residues: Phosphoadenosine 5'-phosphosulfate reductase (259 aa).

Cysteine 244 (nucleophile; cysteine thiosulfonate intermediate) is an active-site residue.

Belongs to the PAPS reductase family. CysH subfamily.

It localises to the cytoplasm. It carries out the reaction [thioredoxin]-disulfide + sulfite + adenosine 3',5'-bisphosphate + 2 H(+) = [thioredoxin]-dithiol + 3'-phosphoadenylyl sulfate. The protein operates within sulfur metabolism; hydrogen sulfide biosynthesis; sulfite from sulfate: step 3/3. Functionally, catalyzes the formation of sulfite from phosphoadenosine 5'-phosphosulfate (PAPS) using thioredoxin as an electron donor. The sequence is that of Phosphoadenosine 5'-phosphosulfate reductase from Vibrio campbellii (strain ATCC BAA-1116).